The sequence spans 115 residues: Large ribosomal subunit protein eL36 (115 aa).

Belongs to the eukaryotic ribosomal protein eL36 family. In terms of assembly, component of the large ribosomal subunit.

Its subcellular location is the cytoplasm. It is found in the cytosol. Its function is as follows. Component of the large ribosomal subunit. This is Large ribosomal subunit protein eL36 (RpL36) from Drosophila melanogaster (Fruit fly).